Reading from the N-terminus, the 635-residue chain is Chaperone protein HtpG (635 aa).

The interval 1–346 (MSQTTTTSAS…SADLPLNVSR (346 aa)) is a; substrate-binding. Residues 347-563 (EILQESRDVR…QNELSPHLLR (217 aa)) form a b region. Positions 564-635 (MLKAAGQEAP…KRLNGLLLKA (72 aa)) are c.

Belongs to the heat shock protein 90 family. As to quaternary structure, homodimer.

It is found in the cytoplasm. Its function is as follows. Molecular chaperone. Has ATPase activity. The protein is Chaperone protein HtpG of Bordetella pertussis (strain Tohama I / ATCC BAA-589 / NCTC 13251).